We begin with the raw amino-acid sequence, 261 residues long: Putative methyltransferase MJ0046 (261 aa).

Belongs to the methyltransferase superfamily.

In Methanocaldococcus jannaschii (strain ATCC 43067 / DSM 2661 / JAL-1 / JCM 10045 / NBRC 100440) (Methanococcus jannaschii), this protein is Putative methyltransferase MJ0046.